The primary structure comprises 223 residues: Large ribosomal subunit protein uL3 (223 aa).

Belongs to the universal ribosomal protein uL3 family. As to quaternary structure, part of the 50S ribosomal subunit. Forms a cluster with proteins L14 and L19.

In terms of biological role, one of the primary rRNA binding proteins, it binds directly near the 3'-end of the 23S rRNA, where it nucleates assembly of the 50S subunit. In Mycoplasma capricolum subsp. capricolum (strain California kid / ATCC 27343 / NCTC 10154), this protein is Large ribosomal subunit protein uL3.